The following is a 158-amino-acid chain: 14-3-3 protein gamma (158 aa).

An interaction with SPATA18/MIEAP region spans residues 1-158 (AAAMKNVTEL…TSDQQDDDGG (158 aa)). At Ser48 the chain carries Phosphoserine. A Phosphotyrosine modification is found at Tyr60. At Thr72 the chain carries Phosphothreonine. The residue at position 130 (Ser130) is a Phosphoserine. Thr149 is modified (phosphothreonine). Ser150 carries the phosphoserine modification.

The protein belongs to the 14-3-3 family. In terms of assembly, homodimer. Part of a complex that contains DSG3, PKP1, YAP1 and YWHAG; the complex is required for localization of DSG3 and YAP1 to the cell membrane in keratinocytes. Interacts with SAMSN1. Interacts with RAF1, SSH1 and CRTC2/TORC2. Interacts with ABL1 (phosphorylated form); the interaction retains it in the cytoplasm. Interacts with GAB2. Interacts with MDM4 (phosphorylated); negatively regulates MDM4 activity toward TP53. Interacts with PKA-phosphorylated AANAT and SIRT2. Interacts with the 'Thr-369' phosphorylated form of DAPK2. Interacts with PI4KB, TBC1D22A and TBC1D22B. Interacts with SLITRK1. Interacts with LRRK2; this interaction is dependent on LRRK2 phosphorylation. Interacts with MARK2 and MARK3. Interacts with MEFV. Interacts with ENDOG, TSC2 and PIK3C3; interaction with ENDOG weakens its interaction with TSC2 and PIK3C3. Interacts with (phosphorylated) WDR24. Interacts with BEST1; this interaction promotes L-glutamate channel activity leading to the positive regulation of NMDA glutamate receptor activity through the L-glutamate secretion. Interacts with PKP1 (when phosphorylated); the interaction results in translocation of PKP1 to the cytoplasm and loss of intercellular adhesion in keratinocytes. Interacts with SPATA18/MIEAP; a protein that also plays a role in MALM. Post-translationally, phosphorylated by various PKC isozymes.

The protein resides in the cytoplasm. The protein localises to the cytosol. Its subcellular location is the mitochondrion matrix. Its function is as follows. Adapter protein implicated in the regulation of a large spectrum of both general and specialized signaling pathways. Binds to a large number of partners, usually by recognition of a phosphoserine or phosphothreonine motif. Binding generally results in the modulation of the activity of the binding partner. Promotes inactivation of WDR24 component of the GATOR2 complex by binding to phosphorylated WDR24. Participates in the positive regulation of NMDA glutamate receptor activity by promoting the L-glutamate secretion through interaction with BEST1. Reduces keratinocyte intercellular adhesion, via interacting with PKP1 and sequestering it in the cytoplasm, thereby reducing its incorporation into desmosomes. Plays a role in mitochondrial protein catabolic process (also named MALM) that promotes the degradation of damaged proteins inside mitochondria. This Ovis aries (Sheep) protein is 14-3-3 protein gamma.